A 784-amino-acid chain; its full sequence is Ubiquitin carboxyl-terminal hydrolase 1 (784 aa).

Disordered regions lie at residues 1–21 (MPGVIPSESNGLSRGSPSKKN) and 34–56 (KRALDFTDSQENEEKTSEYRGSE). Polar residues predominate over residues 7 to 16 (SESNGLSRGS). Phosphoserine is present on residues S16 and S42. Residues 45 to 56 (NEEKTSEYRGSE) show a composition bias toward basic and acidic residues. S67 is modified (phosphoserine). The region spanning 81-784 (VGLNNLGNTC…TPYLLFYKKL (704 aa)) is the USP domain. Residue C90 is the Nucleophile of the active site. Composition is skewed to basic and acidic residues over residues 233 to 243 (VEEQSLQKEET) and 252 to 264 (DSMRNTEDVKEQL). 2 disordered regions span residues 233-342 (VEEQ…INWL) and 362-414 (TTNQ…KSGN). The residue at position 474 (S474) is a Phosphoserine. Catalysis depends on H592, which acts as the Proton acceptor. A disordered region spans residues 684-725 (NPDKVVGTPFTDNRNSETNDTTNGTHESDRNKESSDQTGVNM). The segment covering 693-708 (FTDNRNSETNDTTNGT) has biased composition (polar residues). Basic and acidic residues predominate over residues 709-718 (HESDRNKESS). S767 carries the post-translational modification Phosphoserine.

The protein belongs to the peptidase C19 family. In terms of assembly, interacts with FANCD2 and PCNA. Interacts with WDR48. Interacts with ATAD5; the interaction regulates USP1-mediated PCNA deubiquitination. In terms of processing, autocatalytic cleavage of USP1 following UV irradiation inactivates it, leading to an increase in ubiquitinated PCNA, recruitment of POLH and translesion synthesis. Post-translationally, ubiquitinated by the CRL2(KLHDC2) complex following autocatalytic cleavage, leading to its degradation: the CRL2(KLHDC2) complex recognizes the diglycine (Gly-Gly) at the C-terminus.

The protein localises to the nucleus. It carries out the reaction Thiol-dependent hydrolysis of ester, thioester, amide, peptide and isopeptide bonds formed by the C-terminal Gly of ubiquitin (a 76-residue protein attached to proteins as an intracellular targeting signal).. In terms of biological role, negative regulator of DNA damage repair which specifically deubiquitinates monoubiquitinated FANCD2. Also involved in PCNA-mediated translesion synthesis (TLS) by deubiquitinating monoubiquitinated PCNA. Has almost no deubiquitinating activity by itself and requires the interaction with WDR48 to have a high activity. The sequence is that of Ubiquitin carboxyl-terminal hydrolase 1 from Mus musculus (Mouse).